An 887-amino-acid polypeptide reads, in one-letter code: Alanine--tRNA ligase (887 aa).

Zn(2+) contacts are provided by His-564, His-568, Cys-676, and His-680.

This sequence belongs to the class-II aminoacyl-tRNA synthetase family. Zn(2+) serves as cofactor.

The protein localises to the cytoplasm. The enzyme catalyses tRNA(Ala) + L-alanine + ATP = L-alanyl-tRNA(Ala) + AMP + diphosphate. Catalyzes the attachment of alanine to tRNA(Ala) in a two-step reaction: alanine is first activated by ATP to form Ala-AMP and then transferred to the acceptor end of tRNA(Ala). Also edits incorrectly charged Ser-tRNA(Ala) and Gly-tRNA(Ala) via its editing domain. The chain is Alanine--tRNA ligase from Rhizobium meliloti (strain 1021) (Ensifer meliloti).